Here is a 274-residue protein sequence, read N- to C-terminus: 2,3,4,5-tetrahydropyridine-2,6-dicarboxylate N-succinyltransferase (274 aa).

R106 and D143 together coordinate substrate.

The protein belongs to the transferase hexapeptide repeat family. In terms of assembly, homotrimer.

It is found in the cytoplasm. It carries out the reaction (S)-2,3,4,5-tetrahydrodipicolinate + succinyl-CoA + H2O = (S)-2-succinylamino-6-oxoheptanedioate + CoA. It participates in amino-acid biosynthesis; L-lysine biosynthesis via DAP pathway; LL-2,6-diaminopimelate from (S)-tetrahydrodipicolinate (succinylase route): step 1/3. This chain is 2,3,4,5-tetrahydropyridine-2,6-dicarboxylate N-succinyltransferase, found in Rickettsia akari (strain Hartford).